A 324-amino-acid chain; its full sequence is NADH-ubiquinone oxidoreductase chain 1 (324 aa).

8 consecutive transmembrane segments (helical) span residues Ile5–Phe25, Phe75–Leu95, Leu106–Gly126, Ile146–Phe166, Thr177–Ala197, Leu228–Phe248, Gln259–Ile279, and Phe299–Ser319.

This sequence belongs to the complex I subunit 1 family.

Its subcellular location is the mitochondrion inner membrane. It carries out the reaction a ubiquinone + NADH + 5 H(+)(in) = a ubiquinol + NAD(+) + 4 H(+)(out). Functionally, core subunit of the mitochondrial membrane respiratory chain NADH dehydrogenase (Complex I) that is believed to belong to the minimal assembly required for catalysis. Complex I functions in the transfer of electrons from NADH to the respiratory chain. The immediate electron acceptor for the enzyme is believed to be ubiquinone. In Squalus acanthias (Spiny dogfish), this protein is NADH-ubiquinone oxidoreductase chain 1 (MT-ND1).